A 349-amino-acid polypeptide reads, in one-letter code: Protein-glutamate methylesterase/protein-glutamine glutaminase 1 (349 aa).

Positions 2–119 (RTLIVDDSAF…DVNKAEKELV (118 aa)) constitute a Response regulatory domain. At D53 the chain carries 4-aspartylphosphate. A CheB-type methylesterase domain is found at 158–345 (ILIGSSTGGP…EEIVKRLEAK (188 aa)). Catalysis depends on residues S163, H190, and D287.

The protein belongs to the CheB family. Phosphorylated by CheA. Phosphorylation of the N-terminal regulatory domain activates the methylesterase activity.

It is found in the cytoplasm. The enzyme catalyses [protein]-L-glutamate 5-O-methyl ester + H2O = L-glutamyl-[protein] + methanol + H(+). It catalyses the reaction L-glutaminyl-[protein] + H2O = L-glutamyl-[protein] + NH4(+). Functionally, involved in chemotaxis. Part of a chemotaxis signal transduction system that modulates chemotaxis in response to various stimuli. Catalyzes the demethylation of specific methylglutamate residues introduced into the chemoreceptors (methyl-accepting chemotaxis proteins or MCP) by CheR. Also mediates the irreversible deamidation of specific glutamine residues to glutamic acid. The chain is Protein-glutamate methylesterase/protein-glutamine glutaminase 1 from Methanosarcina acetivorans (strain ATCC 35395 / DSM 2834 / JCM 12185 / C2A).